Here is a 220-residue protein sequence, read N- to C-terminus: Guanylate kinase (220 aa).

The 181-residue stretch at 14 to 194 (GLMVVISSPS…SYAAIKSIIN (181 aa)) folds into the Guanylate kinase-like domain. An ATP-binding site is contributed by 21–28 (SPSGAGKS).

This sequence belongs to the guanylate kinase family.

The protein resides in the cytoplasm. It catalyses the reaction GMP + ATP = GDP + ADP. In terms of biological role, essential for recycling GMP and indirectly, cGMP. The chain is Guanylate kinase from Brucella abortus (strain 2308).